Consider the following 1031-residue polypeptide: Error-prone DNA polymerase (1031 aa).

This sequence belongs to the DNA polymerase type-C family. DnaE2 subfamily.

It localises to the cytoplasm. The catalysed reaction is DNA(n) + a 2'-deoxyribonucleoside 5'-triphosphate = DNA(n+1) + diphosphate. In terms of biological role, DNA polymerase involved in damage-induced mutagenesis and translesion synthesis (TLS). It is not the major replicative DNA polymerase. The sequence is that of Error-prone DNA polymerase from Pseudomonas savastanoi pv. phaseolicola (strain 1448A / Race 6) (Pseudomonas syringae pv. phaseolicola (strain 1448A / Race 6)).